A 71-amino-acid polypeptide reads, in one-letter code: Small, acid-soluble spore protein 2 (71 aa).

The protein belongs to the alpha/beta-type SASP family.

Functionally, SASP are bound to spore DNA. They are double-stranded DNA-binding proteins that cause DNA to change to an a-like conformation. They protect the DNA backbone from chemical and enzymatic cleavage and are thus involved in dormant spore's high resistance to UV light. This Bacillus subtilis protein is Small, acid-soluble spore protein 2.